Consider the following 479-residue polypeptide: Bifunctional protein HldE (479 aa).

Positions 1–322 are ribokinase; it reads MIDDFRFGRI…RELLQEMPET (322 aa). ATP is bound at residue 198-201; that stretch reads NRIE. Residue Asp267 is part of the active site. Positions 347–479 are cytidylyltransferase; it reads FTNGCFDLVH…LVRGMQSAPS (133 aa).

In the N-terminal section; belongs to the carbohydrate kinase PfkB family. It in the C-terminal section; belongs to the cytidylyltransferase family. In terms of assembly, homodimer.

The enzyme catalyses D-glycero-beta-D-manno-heptose 7-phosphate + ATP = D-glycero-beta-D-manno-heptose 1,7-bisphosphate + ADP + H(+). The catalysed reaction is D-glycero-beta-D-manno-heptose 1-phosphate + ATP + H(+) = ADP-D-glycero-beta-D-manno-heptose + diphosphate. The protein operates within nucleotide-sugar biosynthesis; ADP-L-glycero-beta-D-manno-heptose biosynthesis; ADP-L-glycero-beta-D-manno-heptose from D-glycero-beta-D-manno-heptose 7-phosphate: step 1/4. Its pathway is nucleotide-sugar biosynthesis; ADP-L-glycero-beta-D-manno-heptose biosynthesis; ADP-L-glycero-beta-D-manno-heptose from D-glycero-beta-D-manno-heptose 7-phosphate: step 3/4. Functionally, catalyzes the phosphorylation of D-glycero-D-manno-heptose 7-phosphate at the C-1 position to selectively form D-glycero-beta-D-manno-heptose-1,7-bisphosphate. In terms of biological role, catalyzes the ADP transfer from ATP to D-glycero-beta-D-manno-heptose 1-phosphate, yielding ADP-D-glycero-beta-D-manno-heptose. The protein is Bifunctional protein HldE of Gluconobacter oxydans (strain 621H) (Gluconobacter suboxydans).